A 180-amino-acid polypeptide reads, in one-letter code: Large ribosomal subunit protein uL6 (180 aa).

This sequence belongs to the universal ribosomal protein uL6 family. As to quaternary structure, part of the 50S ribosomal subunit.

This protein binds to the 23S rRNA, and is important in its secondary structure. It is located near the subunit interface in the base of the L7/L12 stalk, and near the tRNA binding site of the peptidyltransferase center. This chain is Large ribosomal subunit protein uL6, found in Clostridium kluyveri (strain NBRC 12016).